The primary structure comprises 231 residues: Large ribosomal subunit protein uL1 (231 aa).

Belongs to the universal ribosomal protein uL1 family. In terms of assembly, part of the 50S ribosomal subunit.

In terms of biological role, binds directly to 23S rRNA. The L1 stalk is quite mobile in the ribosome, and is involved in E site tRNA release. Protein L1 is also a translational repressor protein, it controls the translation of the L11 operon by binding to its mRNA. The chain is Large ribosomal subunit protein uL1 from Beijerinckia indica subsp. indica (strain ATCC 9039 / DSM 1715 / NCIMB 8712).